Reading from the N-terminus, the 140-residue chain is Interleukin-4 (140 aa).

Residues 1-20 (MGLNPQLVVILLFFLECTRS) form the signal peptide. 3 disulfide bridges follow: cysteine 25/cysteine 107, cysteine 47/cysteine 87, and cysteine 69/cysteine 114. 3 N-linked (GlcNAc...) asparagine glycosylation sites follow: asparagine 61, asparagine 91, and asparagine 117.

Belongs to the IL-4/IL-13 family. In terms of assembly, interacts with IL4R. Interacts with IL13RA1.

Its subcellular location is the secreted. Its function is as follows. Cytokine secreted primarily by mast cells, T-cells, eosinophils, and basophils that plays a role in regulating antibody production, hematopoiesis and inflammation, and the development of effector T-cell responses. Induces the expression of class II MHC molecules on resting B-cells. Enhances both secretion and cell surface expression of IgE and IgG1. Also regulates the expression of the low affinity Fc receptor for IgE (CD23) on both lymphocytes and monocytes. Positively regulates IL31RA expression in macrophages. Stimulates autophagy in dendritic cells by interfering with mTORC1 signaling and through the induction of RUFY4. In addition, plays a critical role in higher functions of the normal brain, such as memory and learning. Upon binding to IL4, IL4R receptor dimerizes either with the common IL2R gamma chain/IL2RG to produce the type 1 signaling complex, located mainly on hematopoietic cells, or with the IL13RA1 to produce the type 2 complex, which is also expressed on nonhematopoietic cells. Engagement of both types of receptors initiates JAK3 and to a lower extend JAK1 phosphorylation leading to activation of the signal transducer and activator of transcription 6/STAT6. The sequence is that of Interleukin-4 (Il4) from Mus musculus (Mouse).